We begin with the raw amino-acid sequence, 208 residues long: Imidazoleglycerol-phosphate dehydratase (208 aa).

Residues 1-22 (MTRRAAVKAPRAGAAARRGSVA) are disordered. The span at 7–19 (VKAPRAGAAARRG) shows a compositional bias: low complexity.

The protein belongs to the imidazoleglycerol-phosphate dehydratase family.

The protein resides in the cytoplasm. The catalysed reaction is D-erythro-1-(imidazol-4-yl)glycerol 3-phosphate = 3-(imidazol-4-yl)-2-oxopropyl phosphate + H2O. The protein operates within amino-acid biosynthesis; L-histidine biosynthesis; L-histidine from 5-phospho-alpha-D-ribose 1-diphosphate: step 6/9. This chain is Imidazoleglycerol-phosphate dehydratase, found in Anaeromyxobacter dehalogenans (strain 2CP-C).